Reading from the N-terminus, the 299-residue chain is Mitochondrial 2-oxodicarboxylate carrier (299 aa).

3 Solcar repeats span residues 11–100 (REAS…YKKL), 107–196 (SPAL…VKNM), and 205–294 (LEFW…TYSW). 6 helical membrane-spanning segments follow: residues 17–37 (IVAG…LDVV), 70–89 (FGFY…KRAV), 113–133 (AIAG…FEVV), 167–187 (GLNK…MVYF), 205–225 (LEFW…SVIN), and 277–297 (LGPG…WLQE).

The protein belongs to the mitochondrial carrier (TC 2.A.29) family. As to expression, expressed in placenta, gall bladder and colon.

Its subcellular location is the mitochondrion inner membrane. It carries out the reaction 2-oxoadipate(in) + 2-oxoglutarate(out) = 2-oxoadipate(out) + 2-oxoglutarate(in). The enzyme catalyses hexanedioate(in) + 2-oxoglutarate(out) = hexanedioate(out) + 2-oxoglutarate(in). It catalyses the reaction L-2-aminoadipate(in) + 2-oxoglutarate(out) = L-2-aminoadipate(out) + 2-oxoglutarate(in). The catalysed reaction is glutarate(in) + 2-oxoglutarate(out) = glutarate(out) + 2-oxoglutarate(in). It carries out the reaction 2-oxoheptanedioate(in) + 2-oxoglutarate(out) = 2-oxoheptanedioate(out) + 2-oxoglutarate(in). The enzyme catalyses heptanedioate(in) + 2-oxoglutarate(out) = heptanedioate(out) + 2-oxoglutarate(in). It catalyses the reaction citrate(in) + 2-oxoglutarate(out) = citrate(out) + 2-oxoglutarate(in). In terms of biological role, transports dicarboxylates across the inner membranes of mitochondria by a counter-exchange mechanism. Can transport 2-oxoadipate (2-oxohexanedioate), 2-oxoglutarate, adipate (hexanedioate), glutarate, and to a lesser extent, pimelate (heptanedioate), 2-oxopimelate (2-oxoheptanedioate), 2-aminoadipate (2-aminohexanedioate), oxaloacetate, and citrate. Plays a central role in catabolism of lysine, hydroxylysine, and tryptophan, by transporting common metabolite intermediates (such as 2-oxoadipate) into the mitochondria, where it is converted into acetyl-CoA and can enter the citric acid (TCA) cycle. The sequence is that of Mitochondrial 2-oxodicarboxylate carrier (SLC25A21) from Homo sapiens (Human).